Consider the following 179-residue polypeptide: ATP synthase subunit delta (179 aa).

Belongs to the ATPase delta chain family. F-type ATPases have 2 components, F(1) - the catalytic core - and F(0) - the membrane proton channel. F(1) has five subunits: alpha(3), beta(3), gamma(1), delta(1), epsilon(1). F(0) has three main subunits: a(1), b(2) and c(10-14). The alpha and beta chains form an alternating ring which encloses part of the gamma chain. F(1) is attached to F(0) by a central stalk formed by the gamma and epsilon chains, while a peripheral stalk is formed by the delta and b chains.

Its subcellular location is the cell membrane. In terms of biological role, f(1)F(0) ATP synthase produces ATP from ADP in the presence of a proton or sodium gradient. F-type ATPases consist of two structural domains, F(1) containing the extramembraneous catalytic core and F(0) containing the membrane proton channel, linked together by a central stalk and a peripheral stalk. During catalysis, ATP synthesis in the catalytic domain of F(1) is coupled via a rotary mechanism of the central stalk subunits to proton translocation. Functionally, this protein is part of the stalk that links CF(0) to CF(1). It either transmits conformational changes from CF(0) to CF(1) or is implicated in proton conduction. The protein is ATP synthase subunit delta of Staphylococcus aureus (strain Mu50 / ATCC 700699).